Here is a 376-residue protein sequence, read N- to C-terminus: Succinyl-diaminopimelate desuccinylase (376 aa).

Zn(2+) is bound at residue His66. Residue Asp68 is part of the active site. Asp99 contributes to the Zn(2+) binding site. Glu133 serves as the catalytic Proton acceptor. Zn(2+)-binding residues include Glu134, Glu162, and His348.

It belongs to the peptidase M20A family. DapE subfamily. In terms of assembly, homodimer. Requires Zn(2+) as cofactor. It depends on Co(2+) as a cofactor.

The catalysed reaction is N-succinyl-(2S,6S)-2,6-diaminopimelate + H2O = (2S,6S)-2,6-diaminopimelate + succinate. The protein operates within amino-acid biosynthesis; L-lysine biosynthesis via DAP pathway; LL-2,6-diaminopimelate from (S)-tetrahydrodipicolinate (succinylase route): step 3/3. In terms of biological role, catalyzes the hydrolysis of N-succinyl-L,L-diaminopimelic acid (SDAP), forming succinate and LL-2,6-diaminopimelate (DAP), an intermediate involved in the bacterial biosynthesis of lysine and meso-diaminopimelic acid, an essential component of bacterial cell walls. The protein is Succinyl-diaminopimelate desuccinylase of Xanthomonas oryzae pv. oryzae (strain PXO99A).